The primary structure comprises 73 residues: Antitoxin VapB2 (73 aa).

Forms a homodimer, which binds to a toxin homodimer, which then oligomerizes further to a hetero-octamer. When bound to toxin VapC2 the toxin activity is inhibited; 1 antitoxin may suffice to inhibit toxin.

In terms of biological role, antitoxin component of a type II toxin-antitoxin (TA) system. Upon expression in M.smegmatis neutralizes the effect of cognate toxin VapC2. The C-terminal helix of the antitoxin may obstruct the toxin's RNA-binding groove, blocking access to the active sites. Additionally, the C-terminal arginine of the antitoxin may remove Mg(2+) ions from the toxin active sites. The sequence is that of Antitoxin VapB2 (vapB2) from Mycobacterium tuberculosis (strain ATCC 25618 / H37Rv).